The primary structure comprises 105 residues: Small ribosomal subunit protein uS10 (105 aa).

This sequence belongs to the universal ribosomal protein uS10 family. As to quaternary structure, part of the 30S ribosomal subunit.

Its function is as follows. Involved in the binding of tRNA to the ribosomes. This Chlamydia muridarum (strain MoPn / Nigg) protein is Small ribosomal subunit protein uS10.